The chain runs to 873 residues: Bifunctional uridylyltransferase/uridylyl-removing enzyme (873 aa).

The uridylyltransferase stretch occupies residues 1-332; the sequence is MKYLSPLSLS…HQGEQDDAII (332 aa). Residues 333–692 are uridylyl-removing; sequence IDDDFQRRGR…ISKNASRGGT (360 aa). The HD domain maps to 451-573; the sequence is VDEHSIRLLK…VRDEERLDYL (123 aa). ACT domains are found at residues 693 to 777 and 800 to 873; these read EIFV…RPPR and LMEF…RLSS.

This sequence belongs to the GlnD family. Mg(2+) is required as a cofactor.

The enzyme catalyses [protein-PII]-L-tyrosine + UTP = [protein-PII]-uridylyl-L-tyrosine + diphosphate. It carries out the reaction [protein-PII]-uridylyl-L-tyrosine + H2O = [protein-PII]-L-tyrosine + UMP + H(+). With respect to regulation, uridylyltransferase (UTase) activity is inhibited by glutamine, while glutamine activates uridylyl-removing (UR) activity. Functionally, modifies, by uridylylation and deuridylylation, the PII regulatory proteins (GlnB and homologs), in response to the nitrogen status of the cell that GlnD senses through the glutamine level. Under low glutamine levels, catalyzes the conversion of the PII proteins and UTP to PII-UMP and PPi, while under higher glutamine levels, GlnD hydrolyzes PII-UMP to PII and UMP (deuridylylation). Thus, controls uridylylation state and activity of the PII proteins, and plays an important role in the regulation of nitrogen assimilation and metabolism. This chain is Bifunctional uridylyltransferase/uridylyl-removing enzyme, found in Aliivibrio fischeri (strain ATCC 700601 / ES114) (Vibrio fischeri).